A 390-amino-acid polypeptide reads, in one-letter code: Succinate--CoA ligase [ADP-forming] subunit beta (390 aa).

In terms of domain architecture, ATP-grasp spans 9 to 245; that stretch reads KHLLKKYNIP…TTQEDEHETM (237 aa). ATP contacts are provided by residues K46, 53-55, E99, S102, and E107; that span reads GRG. The Mg(2+) site is built by N200 and D214. Substrate contacts are provided by residues N265 and 322 to 324; that span reads GIV.

This sequence belongs to the succinate/malate CoA ligase beta subunit family. In terms of assembly, heterotetramer of two alpha and two beta subunits. Requires Mg(2+) as cofactor.

The enzyme catalyses succinate + ATP + CoA = succinyl-CoA + ADP + phosphate. It carries out the reaction GTP + succinate + CoA = succinyl-CoA + GDP + phosphate. It participates in carbohydrate metabolism; tricarboxylic acid cycle; succinate from succinyl-CoA (ligase route): step 1/1. In terms of biological role, succinyl-CoA synthetase functions in the citric acid cycle (TCA), coupling the hydrolysis of succinyl-CoA to the synthesis of either ATP or GTP and thus represents the only step of substrate-level phosphorylation in the TCA. The beta subunit provides nucleotide specificity of the enzyme and binds the substrate succinate, while the binding sites for coenzyme A and phosphate are found in the alpha subunit. The protein is Succinate--CoA ligase [ADP-forming] subunit beta of Coxiella burnetii (strain RSA 493 / Nine Mile phase I).